The following is a 77-amino-acid chain: Protein IDA (77 aa).

The first 26 residues, 1–26 (MAPCRTMMVLLCFVLFLAASSSCVAA), serve as a signal peptide directing secretion. Positions 56 to 69 (GVPIPPSAPSKRHN) are RLK5-binding.

As to quaternary structure, interaction with RLK5. In terms of tissue distribution, expressed specifically in the floral abscission zone.

It localises to the secreted. It is found in the extracellular space. Its function is as follows. Involved in an ethylene-independent separation step of floral abscission. Promotes abscission zone (AZ) cells rounding. May act with RLK5 and HSL2 as ligand-receptor pairs. This Arabidopsis thaliana (Mouse-ear cress) protein is Protein IDA.